The following is a 229-amino-acid chain: Allatostatin-A (229 aa).

Positions 1–18 are cleaved as a signal peptide; it reads MLSTSLPVCFLVIGAALC. Positions 19–48 are excised as a propeptide; sequence APERMQNDPDPHDSTAQGSDNHSDHIAPLA. Residues 23–46 form a disordered region; the sequence is MQNDPDPHDSTAQGSDNHSDHIAP. Leucine 58 is subject to Leucine amide. A propeptide spanning residues 62 to 80 is cleaved from the precursor; the sequence is AYSYVSEYKRLPVYNFGLG. Position 90 is a leucine amide (leucine 90). Residues 94–130 constitute a propeptide that is removed on maturation; the sequence is SVDEDQTNDDQQQIMNNDLDQAALAEFFDQYDDAGYE. Leucine 140 is subject to Leucine amide. The propeptide occupies 144 to 152; the sequence is FADDDTSEE. Leucine 162, leucine 173, leucine 184, leucine 196, and leucine 210 each carry leucine amide. Positions 214-229 are excised as a propeptide; sequence SADDASTEDSDNYFDV.

It belongs to the allatostatin family. As to expression, allatostatin-A-1: Expressed in antennal lobe (AL), corpora cardiaca (CC), corpora allata (CA) and gnathal ganglion (GNG) (at protein level). Expression in AL and GNG detected in most animals, in CC and CA in some animals (at protein level). Allatostatin-A-3: Expressed in antennal lobe (AL), corpora cardiaca (CC), corpora allata (CA) and gnathal ganglion (GNG) (at protein level). Expression in AL detected in all animals, in GNG, CC and CA in most animals (at protein level). Allatostatin-A-4: Expressed in antennal lobe (AL), corpora cardiaca (CC), corpora allata (CA) and gnathal ganglion (GNG) in all animals (at protein level). Allatostatin-A-5: Expressed in antennal lobe (AL), corpora cardiaca (CC), corpora allata (CA) and gnathal ganglion (GNG) in all animals (at protein level). Allatostatin-A-6: Expressed in antennal lobe (AL) and gnathal ganglion (GNG) (at protein level). Expression in AL detected in some animals, in GNG in few animals (at protein level). Not expressed in corpora cardiaca (CC) and corpora allata (CA) (at protein level). Allatostatin-A-7: Expressed in antennal lobe (AL), corpora cardiaca (CC), corpora allata (CA) and gnathal ganglion (GNG) (at protein level). Expression in AL detected in all animals, in GNG, CC and CA in most animals (at protein level). Allatostatin-A-8: Expressed in antennal lobe (AL), corpora cardiaca (CC), corpora allata (CA) and gnathal ganglion (GNG) (at protein level). Expression in AL detected in all animals, in GNG, CC and CA in most animals (at protein level). Allatostatin-A-9: Expressed in antennal lobe (AL), corpora cardiaca (CC), corpora allata (CA) and gnathal ganglion (GNG) (at protein level). Expression in AL detected in all animals, in GNG in most animals and in CC and CA in some animals (at protein level).

The protein localises to the secreted. In terms of biological role, neuropeptide inhibitors of juvenile hormone synthesis and gut muscle contraction. The protein is Allatostatin-A of Agrotis ipsilon (Black cutworm moth).